A 542-amino-acid polypeptide reads, in one-letter code: CTP synthase (542 aa).

The tract at residues Met1–Ile265 is amidoligase domain. Residue Ser13 coordinates CTP. Ser13 is a UTP binding site. Residues Ser14–Ile19 and Asp71 contribute to the ATP site. The Mg(2+) site is built by Asp71 and Glu139. CTP is bound by residues Asp146–Glu148, Lys186–Gln191, and Lys222. Residues Lys186–Gln191 and Lys222 contribute to the UTP site. The Glutamine amidotransferase type-1 domain maps to Thr291 to Leu541. Gly353 is a binding site for L-glutamine. The active-site Nucleophile; for glutamine hydrolysis is Cys380. Residues Phe381–Gln384, Glu404, and Arg469 contribute to the L-glutamine site. Active-site residues include His514 and Glu516.

It belongs to the CTP synthase family. As to quaternary structure, homotetramer.

It catalyses the reaction UTP + L-glutamine + ATP + H2O = CTP + L-glutamate + ADP + phosphate + 2 H(+). It carries out the reaction L-glutamine + H2O = L-glutamate + NH4(+). The enzyme catalyses UTP + NH4(+) + ATP = CTP + ADP + phosphate + 2 H(+). It participates in pyrimidine metabolism; CTP biosynthesis via de novo pathway; CTP from UDP: step 2/2. Allosterically activated by GTP, when glutamine is the substrate; GTP has no effect on the reaction when ammonia is the substrate. The allosteric effector GTP functions by stabilizing the protein conformation that binds the tetrahedral intermediate(s) formed during glutamine hydrolysis. Inhibited by the product CTP, via allosteric rather than competitive inhibition. In terms of biological role, catalyzes the ATP-dependent amination of UTP to CTP with either L-glutamine or ammonia as the source of nitrogen. Regulates intracellular CTP levels through interactions with the four ribonucleotide triphosphates. This is CTP synthase from Rhizobium johnstonii (strain DSM 114642 / LMG 32736 / 3841) (Rhizobium leguminosarum bv. viciae).